Reading from the N-terminus, the 207-residue chain is Putative threonylcarbamoyl-AMP synthase (207 aa).

The YrdC-like domain maps to 15–199 (EEERKKVLEF…KIISIREGVI (185 aa)).

Belongs to the SUA5 family.

It localises to the cytoplasm. It catalyses the reaction L-threonine + hydrogencarbonate + ATP = L-threonylcarbamoyladenylate + diphosphate + H2O. Its function is as follows. Required for the formation of a threonylcarbamoyl group on adenosine at position 37 (t(6)A37) in tRNAs that read codons beginning with adenine. Catalyzes the conversion of L-threonine, HCO(3)(-)/CO(2) and ATP to give threonylcarbamoyl-AMP (TC-AMP) as the acyladenylate intermediate, with the release of diphosphate. The polypeptide is Putative threonylcarbamoyl-AMP synthase (Methanocaldococcus jannaschii (strain ATCC 43067 / DSM 2661 / JAL-1 / JCM 10045 / NBRC 100440) (Methanococcus jannaschii)).